Reading from the N-terminus, the 484-residue chain is Ribosomal RNA small subunit methyltransferase F (484 aa).

S-adenosyl-L-methionine is bound by residues 126-132, glutamate 150, aspartate 177, and aspartate 195; that span reads AAAPGSK. Cysteine 248 acts as the Nucleophile in catalysis.

It belongs to the class I-like SAM-binding methyltransferase superfamily. RsmB/NOP family.

The protein resides in the cytoplasm. It catalyses the reaction cytidine(1407) in 16S rRNA + S-adenosyl-L-methionine = 5-methylcytidine(1407) in 16S rRNA + S-adenosyl-L-homocysteine + H(+). Its function is as follows. Specifically methylates the cytosine at position 1407 (m5C1407) of 16S rRNA. This chain is Ribosomal RNA small subunit methyltransferase F, found in Pectobacterium atrosepticum (strain SCRI 1043 / ATCC BAA-672) (Erwinia carotovora subsp. atroseptica).